The sequence spans 225 residues: mRNA-decapping protein D10 (225 aa).

Residues 35-218 (AKYPLSVIGI…NVIKYIINAV (184 aa)) form the Nudix hydrolase domain. The short motif at 116–137 (GKIKDLESITNCLVREIKEELN) is the Nudix box element. E122 contributes to the Mg(2+) binding site. E131 (nucleophile) is an active-site residue. Residue E135 participates in Mn(2+) binding. D157 is a Mg(2+) binding site.

The protein belongs to the Nudix hydrolase family. It depends on Mg(2+) as a cofactor. Mn(2+) serves as cofactor.

Functionally, decapping enzyme required for the removal of the 5'-end m7GpppN cap tethered to viral and host mRNAs to allow their decay in cells. May therefore accelerate viral and cellular mRNA turnover to eliminate competing host mRNAs and allow stage-specific synthesis of viral proteins. Acceleration of the turnover of cellular transcripts may even promote the shutoff of host protein synthesis. This Fowlpox virus (strain NVSL) (FPV) protein is mRNA-decapping protein D10.